Reading from the N-terminus, the 113-residue chain is Nucleoid-associated protein CLJ_B0037 (113 aa).

Residues E93–R102 are compositionally biased toward basic and acidic residues. A disordered region spans residues E93 to F113.

The protein belongs to the YbaB/EbfC family. As to quaternary structure, homodimer.

Its subcellular location is the cytoplasm. It localises to the nucleoid. Its function is as follows. Binds to DNA and alters its conformation. May be involved in regulation of gene expression, nucleoid organization and DNA protection. In Clostridium botulinum (strain 657 / Type Ba4), this protein is Nucleoid-associated protein CLJ_B0037.